An 80-amino-acid chain; its full sequence is Defensin-like protein 14 (80 aa).

The N-terminal stretch at 1–29 (MAKSAAIITFLFAALVLFAAFEAPIMVEA) is a signal peptide. Pyrrolidone carboxylic acid is present on Gln-30. 4 disulfide bridges follow: Cys-33–Cys-80, Cys-44–Cys-65, Cys-50–Cys-74, and Cys-54–Cys-76.

Belongs to the DEFL family.

The protein localises to the secreted. Its function is as follows. Confers broad-spectrum resistance to pathogens. Has antifungal activity in vitro. This chain is Defensin-like protein 14 (PDF1.3), found in Arabidopsis thaliana (Mouse-ear cress).